The chain runs to 309 residues: NAD kinase (309 aa).

The active-site Proton acceptor is Asp89. NAD(+) is bound by residues 89 to 90 (DG), 163 to 164 (NE), His174, Arg191, Asp193, and 204 to 209 (TAYSLS).

The protein belongs to the NAD kinase family. A divalent metal cation serves as cofactor.

Its subcellular location is the cytoplasm. It catalyses the reaction NAD(+) + ATP = ADP + NADP(+) + H(+). Functionally, involved in the regulation of the intracellular balance of NAD and NADP, and is a key enzyme in the biosynthesis of NADP. Catalyzes specifically the phosphorylation on 2'-hydroxyl of the adenosine moiety of NAD to yield NADP. The protein is NAD kinase of Shewanella denitrificans (strain OS217 / ATCC BAA-1090 / DSM 15013).